We begin with the raw amino-acid sequence, 476 residues long: Flavin-dependent halogenase otaD (476 aa).

Residues glycine 14 and glycine 17 each coordinate FAD. 2 residues coordinate chloride: serine 304 and glycine 305. Valine 306 serves as a coordination point for FAD.

The protein belongs to the flavin-dependent halogenase family.

It carries out the reaction ochratoxin B + FADH2 + chloride + O2 = ochratoxin A + FAD + 2 H2O. It participates in mycotoxin biosynthesis. Flavin-dependent halogenase; part of the gene cluster that mediates the biosynthesis of ochratoxin A (OTA), a mycotoxin composed of a chlorinated type I polyketide dihydroisocoumarin moiety linked to L-phenylalanine, and demonstrated to have nephrotoxic, immunotoxic, genotoxic, neurotoxic, and teratogenic properties. OtaD chlorinates ochratoxin B (OTB) at the C-5 position to form OTA. The pathway begins with the highly reducing polyketide synthase otaA that catalyzes the formation of the isocoumarin group during the initial stages of biosynthesis, starting from one acetate and 4 malonate units, to originate the characteristic pentaketide skeleton 7-methylmellein (7-MM) of the OTA molecule. The newly identified cyclase otaY might be involved in the polyketide cyclization reaction during the initial steps of the OTA biosynthesis. 7-MM is then oxidized into 7-carboxymellein (also called ochratoxin beta) by the cytochrome P450 monooxygenase otaC. The NRPS encoded by the otaB gene is involved in the linking of phenylalanine to the dihydroisocoumarin ring. The reaction catalyzed by NRPS results in the production of ochratoxin B (OTB), which is the non-chlorinated analog of OTA and which subsequently serves as the substrate of the halogenase otaD for chlorination activity to form the final molecular structure of OTA, containing a chlorine atom in the C-5 position of the molecule. In Aspergillus niger (strain ATCC MYA-4892 / CBS 513.88 / FGSC A1513), this protein is Flavin-dependent halogenase otaD.